The following is a 246-amino-acid chain: tRNA (guanine-N(1)-)-methyltransferase (246 aa).

S-adenosyl-L-methionine contacts are provided by residues Gly112 and 131–136 (IGDYVL).

This sequence belongs to the RNA methyltransferase TrmD family. In terms of assembly, homodimer.

The protein resides in the cytoplasm. It carries out the reaction guanosine(37) in tRNA + S-adenosyl-L-methionine = N(1)-methylguanosine(37) in tRNA + S-adenosyl-L-homocysteine + H(+). Its function is as follows. Specifically methylates guanosine-37 in various tRNAs. The sequence is that of tRNA (guanine-N(1)-)-methyltransferase from Fervidobacterium nodosum (strain ATCC 35602 / DSM 5306 / Rt17-B1).